A 329-amino-acid chain; its full sequence is Probable nicotianamine synthase 4 (329 aa).

This sequence belongs to the nicotianamine synthase (NAS)-like family.

It carries out the reaction 3 S-adenosyl-L-methionine = nicotianamine + 3 S-methyl-5'-thioadenosine + 3 H(+). Functionally, synthesizes nicotianamine, a polyamine that is the first intermediate in the synthesis of the phytosiderophores of the mugineic acid type found in gramineae which serves as a sensor for the physiological iron status within the plant, and/or might be involved in the transport of iron. The chain is Probable nicotianamine synthase 4 (NAS4) from Hordeum vulgare (Barley).